The following is a 407-amino-acid chain: Lysosome-associated membrane glycoprotein 1 (407 aa).

A signal peptide spans 1–21 (MAAPGAPRSLLLLLLAGLAHG). Positions 22 to 189 (ASALFVVKDS…SKEETRCTQD (168 aa)) are first lumenal domain. The Lumenal portion of the chain corresponds to 22-371 (ASALFVVKDS…VEECMQDGNN (350 aa)). Residues Asn32, Asn40, Asn57, Asn72, Asn79, Asn98, Asn102, Asn116, Asn125, Asn145, Asn160, and Asn178 are each glycosylated (N-linked (GlcNAc...) asparagine). A disulfide bridge connects residues Cys36 and Cys75. A disulfide bond links Cys150 and Cys186. The segment at 183 to 206 (ETRCTQDGPSPTTVPPSPSPPLVP) is disordered. The segment at 190 to 219 (GPSPTTVPPSPSPPLVPTNPTVIKYNVTGE) is hinge. Residues 194-206 (TTVPPSPSPPLVP) are compositionally biased toward pro residues. Residues Asn215, Asn220, Asn233, Asn241, Asn253, Asn283, Asn297, Asn304, and Asn312 are each glycosylated (N-linked (GlcNAc...) asparagine). Positions 220–371 (NGTCLLASMA…VEECMQDGNN (152 aa)) are second lumenal domain. The cysteines at positions 223 and 260 are disulfide-linked. Cys328 and Cys365 are disulfide-bonded. The helical transmembrane segment at 372-395 (MLIPIAVGGALAGLVLIVLIAYLI) threads the bilayer. Residues 396 to 407 (GRKRSHAGYQTI) are Cytoplasmic-facing.

This sequence belongs to the LAMP family. Interacts with ABCB9; this interaction strongly stabilizes ABCB9 and protects ABCB9 against lysosomal degradation. Interacts with FURIN. Interacts with TMEM175; inhibiting the proton channel activity of TMEM175. Post-translationally, O- and N-glycosylated; some of the N-glycans attached to LAMP-1 are polylactosaminoglycans.

The protein resides in the lysosome membrane. The protein localises to the endosome membrane. It is found in the late endosome membrane. Its subcellular location is the cell membrane. It localises to the cytolytic granule membrane. Its function is as follows. Lysosomal membrane glycoprotein which plays an important role in lysosome biogenesis, lysosomal pH regulation, autophagy and cholesterol homeostasis. Acts as an important regulator of lysosomal lumen pH regulation by acting as a direct inhibitor of the proton channel TMEM175, facilitating lysosomal acidification for optimal hydrolase activity. Also plays an important role in NK-cells cytotoxicity. Mechanistically, participates in cytotoxic granule movement to the cell surface and perforin trafficking to the lytic granule. In addition, protects NK-cells from degranulation-associated damage induced by their own cytotoxic granule content. Presents carbohydrate ligands to selectins. In Cricetulus griseus (Chinese hamster), this protein is Lysosome-associated membrane glycoprotein 1 (LAMP1).